Consider the following 212-residue polypeptide: Small ribosomal subunit protein uS5 (212 aa).

The disordered stretch occupies residues 1-42; that stretch reads MPGRERRDGGRSADKNDNNKGRNDRGRNDRNNRRGRGRDDDR. An S5 DRBM domain is found at 45–108; sequence YIERVVTINR…EEARKNFFRV (64 aa).

The protein belongs to the universal ribosomal protein uS5 family. In terms of assembly, part of the 30S ribosomal subunit. Contacts proteins S4 and S8.

In terms of biological role, with S4 and S12 plays an important role in translational accuracy. Functionally, located at the back of the 30S subunit body where it stabilizes the conformation of the head with respect to the body. The chain is Small ribosomal subunit protein uS5 from Corynebacterium kroppenstedtii (strain DSM 44385 / JCM 11950 / CIP 105744 / CCUG 35717).